The following is a 112-amino-acid chain: Large ribosomal subunit protein uL22 (112 aa).

This sequence belongs to the universal ribosomal protein uL22 family. In terms of assembly, part of the 50S ribosomal subunit.

This protein binds specifically to 23S rRNA; its binding is stimulated by other ribosomal proteins, e.g. L4, L17, and L20. It is important during the early stages of 50S assembly. It makes multiple contacts with different domains of the 23S rRNA in the assembled 50S subunit and ribosome. Functionally, the globular domain of the protein is located near the polypeptide exit tunnel on the outside of the subunit, while an extended beta-hairpin is found that lines the wall of the exit tunnel in the center of the 70S ribosome. The chain is Large ribosomal subunit protein uL22 from Caldanaerobacter subterraneus subsp. tengcongensis (strain DSM 15242 / JCM 11007 / NBRC 100824 / MB4) (Thermoanaerobacter tengcongensis).